The primary structure comprises 146 residues: 3-dehydroquinate dehydratase (146 aa).

Tyrosine 23 (proton acceptor) is an active-site residue. The substrate site is built by asparagine 74, histidine 80, and aspartate 87. Histidine 100 functions as the Proton donor in the catalytic mechanism. Residues 101–102 and arginine 111 each bind substrate; that span reads IS.

This sequence belongs to the type-II 3-dehydroquinase family. As to quaternary structure, homododecamer.

It catalyses the reaction 3-dehydroquinate = 3-dehydroshikimate + H2O. It participates in metabolic intermediate biosynthesis; chorismate biosynthesis; chorismate from D-erythrose 4-phosphate and phosphoenolpyruvate: step 3/7. Catalyzes a trans-dehydration via an enolate intermediate. The protein is 3-dehydroquinate dehydratase of Bacillus mycoides (strain KBAB4) (Bacillus weihenstephanensis).